A 444-amino-acid chain; its full sequence is Homogentisate 1,2-dioxygenase (444 aa).

Histidine 298 serves as the catalytic Proton acceptor. Fe cation-binding residues include histidine 341 and glutamate 347. Residues tyrosine 356 and histidine 377 each coordinate homogentisate. Histidine 377 serves as a coordination point for Fe cation.

The protein belongs to the homogentisate dioxygenase family. Hexamer; dimer of trimers. It depends on Fe cation as a cofactor.

The catalysed reaction is homogentisate + O2 = 4-maleylacetoacetate + H(+). The protein operates within amino-acid degradation; L-phenylalanine degradation; acetoacetate and fumarate from L-phenylalanine: step 4/6. Its function is as follows. Involved in the catabolism of homogentisate (2,5-dihydroxyphenylacetate or 2,5-OH-PhAc), a central intermediate in the degradation of phenylalanine and tyrosine. Catalyzes the oxidative ring cleavage of the aromatic ring of homogentisate to yield maleylacetoacetate. This chain is Homogentisate 1,2-dioxygenase, found in Burkholderia lata (strain ATCC 17760 / DSM 23089 / LMG 22485 / NCIMB 9086 / R18194 / 383).